A 367-amino-acid polypeptide reads, in one-letter code: Peptide chain release factor 2 (367 aa).

Residue Gln254 is modified to N5-methylglutamine.

This sequence belongs to the prokaryotic/mitochondrial release factor family. In terms of processing, methylated by PrmC. Methylation increases the termination efficiency of RF2.

The protein localises to the cytoplasm. Its function is as follows. Peptide chain release factor 2 directs the termination of translation in response to the peptide chain termination codons UGA and UAA. This chain is Peptide chain release factor 2, found in Neisseria meningitidis serogroup C / serotype 2a (strain ATCC 700532 / DSM 15464 / FAM18).